An 802-amino-acid polypeptide reads, in one-letter code: Leucine--tRNA ligase (802 aa).

Positions 40-51 match the 'HIGH' region motif; sequence PYPSGAGLHVGH. The 'KMSKS' region signature appears at 576–580; that stretch reads KMSKS. Position 579 (K579) interacts with ATP.

The protein belongs to the class-I aminoacyl-tRNA synthetase family.

The protein resides in the cytoplasm. It catalyses the reaction tRNA(Leu) + L-leucine + ATP = L-leucyl-tRNA(Leu) + AMP + diphosphate. This Bacillus thuringiensis subsp. konkukian (strain 97-27) protein is Leucine--tRNA ligase.